Consider the following 340-residue polypeptide: Methionine import ATP-binding protein MetN 2 (340 aa).

Residues 5–244 (VRFESVTKTF…PQAPASKSFV (240 aa)) form the ABC transporter domain. 41–48 (GYSGAGKS) lines the ATP pocket.

The protein belongs to the ABC transporter superfamily. Methionine importer (TC 3.A.1.24) family. As to quaternary structure, the complex is composed of two ATP-binding proteins (MetN), two transmembrane proteins (MetI) and a solute-binding protein (MetQ).

Its subcellular location is the cell membrane. The enzyme catalyses L-methionine(out) + ATP + H2O = L-methionine(in) + ADP + phosphate + H(+). It carries out the reaction D-methionine(out) + ATP + H2O = D-methionine(in) + ADP + phosphate + H(+). Functionally, part of the ABC transporter complex MetNIQ involved in methionine import. Responsible for energy coupling to the transport system. This Rhodococcus jostii (strain RHA1) protein is Methionine import ATP-binding protein MetN 2.